Consider the following 209-residue polypeptide: High frequency lysogenization protein HflD homolog (209 aa).

It belongs to the HflD family.

The protein localises to the cytoplasm. It is found in the cell inner membrane. The sequence is that of High frequency lysogenization protein HflD homolog from Halorhodospira halophila (strain DSM 244 / SL1) (Ectothiorhodospira halophila (strain DSM 244 / SL1)).